An 861-amino-acid chain; its full sequence is Probable linoleate 9S-lipoxygenase 7 (861 aa).

Residues 29-160 (NVLDFTDLAG…NYKSDRIFFA (132 aa)) enclose the PLAT domain. The region spanning 163–861 (PYLPSETPEL…GKGIPNSVSI (699 aa)) is the Lipoxygenase domain. The tract at residues 220-246 (TLGGSAEYPYPRRGRTGRPPTRTDPKS) is disordered. Residues His522, His527, His713, Asn717, and Ile861 each coordinate Fe cation.

This sequence belongs to the lipoxygenase family. As to quaternary structure, monomer. Fe cation serves as cofactor. In terms of tissue distribution, expressed in tubers. Detected in sprouts and flowers. but not in leaves or stems.

It localises to the cytoplasm. The enzyme catalyses (9Z,12Z)-octadecadienoate + O2 = (9S)-hydroperoxy-(10E,12Z)-octadecadienoate. It functions in the pathway lipid metabolism; oxylipin biosynthesis. Its function is as follows. Plant lipoxygenases may be involved in a number of diverse aspects of plant physiology including growth and development, pest resistance, and senescence or responses to wounding. Catalyzes the hydroperoxidation of lipids containing a cis,cis-1,4-pentadiene structure. This is Probable linoleate 9S-lipoxygenase 7 (LOX1.7) from Solanum tuberosum (Potato).